Consider the following 404-residue polypeptide: Activity-regulated cytoskeleton-associated protein (404 aa).

A coiled-coil region spans residues E51 to V78. The segment at V351–I404 is disordered. The segment covering P363–Q393 has biased composition (polar residues). Residues P394–I404 show a composition bias toward pro residues.

Belongs to the ARC/ARG3.1 family. In terms of assembly, homooligomer; homooligomerizes into virion-like capsids. Post-translationally, palmitoylation anchors the protein into the membrane by allowing direct insertion into the hydrophobic core of the lipid bilayer. In terms of tissue distribution, expressed at various levels throughout the brain.

Its subcellular location is the extracellular vesicle membrane. The protein resides in the postsynaptic cell membrane. It localises to the synapse. The protein localises to the postsynaptic density. It is found in the early endosome membrane. Its subcellular location is the cell projection. The protein resides in the dendrite. It localises to the cytoplasm. The protein localises to the cytoskeleton. It is found in the cell cortex. Its subcellular location is the dendritic spine. Its function is as follows. Master regulator of synaptic plasticity that self-assembles into virion-like capsids that encapsulate RNAs and mediate intercellular RNA transfer in the nervous system. ARC protein is released from neurons in extracellular vesicles that mediate the transfer of ARC mRNA into new target cells, where ARC mRNA can undergo activity-dependent translation. ARC capsids are endocytosed and are able to transfer ARC mRNA into the cytoplasm of neurons. Acts as a key regulator of synaptic plasticity: required for protein synthesis-dependent forms of long-term potentiation (LTP) and depression (LTD) and for the formation of long-term memory. Regulates synaptic plasticity by promoting endocytosis of AMPA receptors (AMPARs) in response to synaptic activity: this endocytic pathway maintains levels of surface AMPARs in response to chronic changes in neuronal activity through synaptic scaling, thereby contributing to neuronal homeostasis. Acts as a postsynaptic mediator of activity-dependent synapse elimination in the developing cerebellum by mediating elimination of surplus climbing fiber synapses. Accumulates at weaker synapses, probably to prevent their undesired enhancement. This suggests that ARC-containing virion-like capsids may be required to eliminate synaptic material. This Gallus gallus (Chicken) protein is Activity-regulated cytoskeleton-associated protein.